The chain runs to 216 residues: Somatotropin (216 aa).

Positions methionine 1–alanine 26 are cleaved as a signal peptide. Residue histidine 45 coordinates Zn(2+). A disulfide bridge links cysteine 78 with cysteine 189. At serine 131 the chain carries Phosphoserine. Position 198 (glutamate 198) interacts with Zn(2+). A disulfide bridge connects residues cysteine 206 and cysteine 214.

It belongs to the somatotropin/prolactin family.

The protein resides in the secreted. Its function is as follows. Plays an important role in growth control. Its major role in stimulating body growth is to stimulate the liver and other tissues to secrete IGF1. It stimulates both the differentiation and proliferation of myoblasts. It also stimulates amino acid uptake and protein synthesis in muscle and other tissues. This Hippopotamus amphibius (Hippopotamus) protein is Somatotropin (GH1).